A 597-amino-acid polypeptide reads, in one-letter code: Putative lipase ATG15 (597 aa).

At Met1 to Trp15 the chain is on the cytoplasmic side. Residues Thr16–Ile36 traverse the membrane as a helical; Signal-anchor for type II membrane protein segment. Over Thr37–Lys597 the chain is Lumenal. Asn195, Asn262, and Asn346 each carry an N-linked (GlcNAc...) asparagine glycan. Catalysis depends on Ser364, which acts as the Charge relay system. Asn481 carries N-linked (GlcNAc...) asparagine glycosylation. Residues Glu507–Cys570 are disordered. Over residues Ser519–Ser554 the composition is skewed to low complexity.

Belongs to the AB hydrolase superfamily. Lipase family. Binds to both phosphatidylinositol (PI) and phosphatidylinositol 3,5-bisphosphate (PIP2).

It localises to the endosome. Its subcellular location is the multivesicular body membrane. The protein resides in the prevacuolar compartment membrane. The enzyme catalyses a triacylglycerol + H2O = a diacylglycerol + a fatty acid + H(+). Lipase which is essential for lysis of subvacuolar cytoplasm to vacuole targeted bodies and intravacuolar autophagic bodies. Involved in the lysis of intravacuolar multivesicular body (MVB) vesicles. The intravacuolar membrane disintegration by ATG15 is critical to life span extension. This is Putative lipase ATG15 (ATG15) from Candida albicans (strain SC5314 / ATCC MYA-2876) (Yeast).